Consider the following 401-residue polypeptide: Argininosuccinate synthase (401 aa).

Residues 10 to 18 and A37 each bind ATP; that span reads AYSGGLDTS. Y89 serves as a coordination point for L-citrulline. Position 119 (G119) interacts with ATP. L-aspartate-binding residues include T121, N125, and D126. Residue N125 coordinates L-citrulline. Residues R129, S178, S187, E263, and Y275 each contribute to the L-citrulline site.

This sequence belongs to the argininosuccinate synthase family. Type 1 subfamily. Homotetramer.

The protein resides in the cytoplasm. The enzyme catalyses L-citrulline + L-aspartate + ATP = 2-(N(omega)-L-arginino)succinate + AMP + diphosphate + H(+). It participates in amino-acid biosynthesis; L-arginine biosynthesis; L-arginine from L-ornithine and carbamoyl phosphate: step 2/3. In Buchnera aphidicola subsp. Schizaphis graminum (strain Sg), this protein is Argininosuccinate synthase.